A 169-amino-acid polypeptide reads, in one-letter code: Putative hydrolase 111R (169 aa).

The Nudix hydrolase domain maps to 46 to 169; sequence FEKRKAGVFV…QKILMALSCN (124 aa). The short motif at 76–98 is the Nudix box element; it reads GHMEAYDHSPKTCAERELKEETG. Mg(2+)-binding residues include E92, E96, and D138.

The protein belongs to the Nudix hydrolase family. Requires Mg(2+) as cofactor. It depends on Mn(2+) as a cofactor.

The polypeptide is Putative hydrolase 111R (Aedes vexans (Inland floodwater mosquito)).